The chain runs to 1067 residues: DNA-directed RNA polymerase subunit beta (1067 aa).

This sequence belongs to the RNA polymerase beta chain family. As to quaternary structure, in plastids the minimal PEP RNA polymerase catalytic core is composed of four subunits: alpha, beta, beta', and beta''. When a (nuclear-encoded) sigma factor is associated with the core the holoenzyme is formed, which can initiate transcription.

It is found in the plastid. Its subcellular location is the chloroplast. It catalyses the reaction RNA(n) + a ribonucleoside 5'-triphosphate = RNA(n+1) + diphosphate. Functionally, DNA-dependent RNA polymerase catalyzes the transcription of DNA into RNA using the four ribonucleoside triphosphates as substrates. This is DNA-directed RNA polymerase subunit beta from Ipomoea purpurea (Common morning glory).